The primary structure comprises 394 residues: Elongation factor Tu 2 (394 aa).

Residues 10 to 204 (KPHVNVGTIG…ALDSYIPEPE (195 aa)) enclose the tr-type G domain. Residues 19–26 (GHVDHGKT) are G1. 19-26 (GHVDHGKT) contributes to the GTP binding site. Residue Thr-26 coordinates Mg(2+). Residues 60-64 (GITIN) form a G2 region. Positions 81 to 84 (DCPG) are G3. Residues 81 to 85 (DCPGH) and 136 to 139 (NKCD) each bind GTP. Positions 136–139 (NKCD) are G4. A G5 region spans residues 174–176 (SAL).

Belongs to the TRAFAC class translation factor GTPase superfamily. Classic translation factor GTPase family. EF-Tu/EF-1A subfamily. Monomer.

The protein resides in the cytoplasm. The enzyme catalyses GTP + H2O = GDP + phosphate + H(+). Functionally, GTP hydrolase that promotes the GTP-dependent binding of aminoacyl-tRNA to the A-site of ribosomes during protein biosynthesis. The chain is Elongation factor Tu 2 from Shewanella sp. (strain MR-4).